A 449-amino-acid chain; its full sequence is Bifunctional protein GlmU (449 aa).

Residues 1–230 (MASSKLAVIV…EAELLGVNAR (230 aa)) form a pyrophosphorylase region. Residues 11–14 (LAAG), K25, Q74, 79–80 (GT), 102–104 (YGD), G142, E156, N171, and N228 each bind UDP-N-acetyl-alpha-D-glucosamine. D104 is a binding site for Mg(2+). N228 is a Mg(2+) binding site. The interval 231-251 (SELAVAEALVQARLREAAMDN) is linker. The segment at 252 to 449 (GATLIDPATV…QQAAKKAKKD (198 aa)) is N-acetyltransferase. The UDP-N-acetyl-alpha-D-glucosamine site is built by R317 and K335. The Proton acceptor role is filled by H347. Residues Y350 and N361 each coordinate UDP-N-acetyl-alpha-D-glucosamine. Residues A364, 370 to 371 (NY), S389, A407, and R424 contribute to the acetyl-CoA site.

In the N-terminal section; belongs to the N-acetylglucosamine-1-phosphate uridyltransferase family. This sequence in the C-terminal section; belongs to the transferase hexapeptide repeat family. In terms of assembly, homotrimer. It depends on Mg(2+) as a cofactor.

Its subcellular location is the cytoplasm. The catalysed reaction is alpha-D-glucosamine 1-phosphate + acetyl-CoA = N-acetyl-alpha-D-glucosamine 1-phosphate + CoA + H(+). It carries out the reaction N-acetyl-alpha-D-glucosamine 1-phosphate + UTP + H(+) = UDP-N-acetyl-alpha-D-glucosamine + diphosphate. The protein operates within nucleotide-sugar biosynthesis; UDP-N-acetyl-alpha-D-glucosamine biosynthesis; N-acetyl-alpha-D-glucosamine 1-phosphate from alpha-D-glucosamine 6-phosphate (route II): step 2/2. Its pathway is nucleotide-sugar biosynthesis; UDP-N-acetyl-alpha-D-glucosamine biosynthesis; UDP-N-acetyl-alpha-D-glucosamine from N-acetyl-alpha-D-glucosamine 1-phosphate: step 1/1. It participates in bacterial outer membrane biogenesis; LPS lipid A biosynthesis. Functionally, catalyzes the last two sequential reactions in the de novo biosynthetic pathway for UDP-N-acetylglucosamine (UDP-GlcNAc). The C-terminal domain catalyzes the transfer of acetyl group from acetyl coenzyme A to glucosamine-1-phosphate (GlcN-1-P) to produce N-acetylglucosamine-1-phosphate (GlcNAc-1-P), which is converted into UDP-GlcNAc by the transfer of uridine 5-monophosphate (from uridine 5-triphosphate), a reaction catalyzed by the N-terminal domain. This is Bifunctional protein GlmU from Paramagnetospirillum magneticum (strain ATCC 700264 / AMB-1) (Magnetospirillum magneticum).